Here is a 131-residue protein sequence, read N- to C-terminus: uncharacterized protein (131 aa).

The next 3 membrane-spanning stretches (helical) occupy residues 13–35 (RFIK…TFPI), 60–79 (LVAL…TYVC), and 100–119 (LFEI…WNIT).

The protein localises to the membrane. This is an uncharacterized protein from Saccharomyces cerevisiae (strain ATCC 204508 / S288c) (Baker's yeast).